The sequence spans 80 residues: DNA-directed RNA polymerase RPB10 homolog (80 aa).

Zn(2+)-binding residues include Cys7, Cys10, Cys65, and Cys66.

It belongs to the archaeal RpoN/eukaryotic RPB10 RNA polymerase subunit family. Part of the viral DNA-directed RNA polymerase that consists of 8 polII-like subunits (RPB1, RPB2, RPB3, RPB5, RPB6, RPB7, RPB9, RPB10), a capping enzyme and a termination factor.

Its subcellular location is the host cytoplasm. In terms of biological role, component of the DNA-directed RNA polymerase (RNAP) that catalyzes the transcription in the cytoplasm of viral DNA into RNA using the four ribonucleoside triphosphates as substrates. In African swine fever virus (isolate Pig/Kenya/KEN-50/1950) (ASFV), this protein is DNA-directed RNA polymerase RPB10 homolog.